The chain runs to 198 residues: Transcription factor IND (198 aa).

Residues 1-33 (MENGMYKKKGVCDSCVSSKSRSNHSPKRSMMEP) form a disordered region. The bHLH domain occupies 118–167 (ISDDPQTVVARRRRERISEKIRILKRIVPGGAKMDTASMLDEAIRYTKFL).

In terms of assembly, homodimer. Heterodimer; possibly with ALC. As to expression, after fertilization, it is expressed in stripes about four cells wide at the margins of developing wild-type fruit. Also expressed in the inner valve layer, which becomes lignified later in fruit development. Detected in roots.

The protein resides in the nucleus. Its function is as follows. Transcription regulator required for seed dispersal. Involved in the differentiation of all three cell types required for fruit dehiscence. Acts as the key regulator in a network including SHP and ALC that controls specification of the valve margin. Works with ALC, SHP, and FUL to allow differentiation of the lignified valve layer, the spring-loaded mechanism of fruit that promotes opening. Regulates the expression of the YJ80 marker. The chain is Transcription factor IND (IND) from Arabidopsis thaliana (Mouse-ear cress).